A 189-amino-acid chain; its full sequence is UPF0312 protein VIBHAR_05924 (189 aa).

The first 22 residues, 1–22 (MKKSLFATGLAIAIALPFGANA), serve as a signal peptide directing secretion.

Belongs to the UPF0312 family. Type 1 subfamily.

The protein resides in the periplasm. The sequence is that of UPF0312 protein VIBHAR_05924 from Vibrio campbellii (strain ATCC BAA-1116).